A 635-amino-acid chain; its full sequence is Early transcription factor 70 kDa subunit (635 aa).

In terms of domain architecture, Helicase ATP-binding spans 32-185 (RSIIDENKSV…SNIISLMSDE (154 aa)). 45–52 (HIMGSGKT) is a binding site for ATP. A DEXH box motif is present at residues 135–138 (DEAH). Residues 326-505 (KFKYFIGKIT…TLPFDIKKLL (180 aa)) enclose the Helicase C-terminal domain.

The protein belongs to the helicase family. VETF subfamily. In terms of assembly, heterodimer of a 70 kDa and a 82 kDa subunit.

It is found in the virion. In terms of biological role, acts with RNA polymerase to initiate transcription from early gene promoters. A DNA-dependent ATPase activity is associated with VETF. The chain is Early transcription factor 70 kDa subunit (VETFS) from Erythrocebus patas (Red guenon).